The following is a 476-amino-acid chain: Transmembrane transporter FPSE_08127 (476 aa).

A helical transmembrane segment spans residues 72–92 (ILAIPAALGALGSIGGSLCII). N-linked (GlcNAc...) asparagine glycosylation is present at asparagine 111. 9 helical membrane-spanning segments follow: residues 133 to 153 (LVGV…VVAI), 164 to 184 (GTCT…FSAI), 192 to 212 (WLTW…VVAV), 231 to 251 (WAPI…NIFI), 275 to 295 (ACLV…LVIY), 317 to 337 (VAYG…QHVA), 364 to 384 (LGIN…VPIL), 387 to 407 (LLGL…PALL), and 431 to 451 (LIMM…VVLI).

This sequence belongs to the amino acid/polyamine transporter 2 family.

The protein resides in the membrane. Its function is as follows. Transmembrane transporter; part of the Fusarium detoxification of benzoxazolinone cluster involved in the degradation of benzoxazolinones produced by the host plant. Maize, wheat, and rye produce the 2 benzoxazinone phytoanticipins 2,4-dihy-droxy-7-methoxy-1,4-benzoxazin-3-one (DIMBOA) and 2,4-dihydroxy-1,4-benzoxazin-3-one (DIBOA) that, due to their inherent instability once released, spontaneously degrade to the more stable corresponding benzoxazolinones, 6-methoxy-2-benzoxazolinone (MBOA) and 2-benzoxazolinone (BOA), respectively. FPSE_08127 is proposed to shuttle metabolites of benzoxazolinone degradation. The protein is Transmembrane transporter FPSE_08127 of Fusarium pseudograminearum (strain CS3096) (Wheat and barley crown-rot fungus).